Here is a 663-residue protein sequence, read N- to C-terminus: uncharacterized protein (663 aa).

207–214 (GPPGTGKT) contacts ATP.

It belongs to the DNA2/NAM7 helicase family.

This is an uncharacterized protein from Methanocaldococcus jannaschii (strain ATCC 43067 / DSM 2661 / JAL-1 / JCM 10045 / NBRC 100440) (Methanococcus jannaschii).